A 554-amino-acid chain; its full sequence is Dihydroxy-acid dehydratase (554 aa).

D78 lines the Mg(2+) pocket. C119 is a [2Fe-2S] cluster binding site. Residues D120 and K121 each coordinate Mg(2+). K121 is subject to N6-carboxylysine. Residue C191 participates in [2Fe-2S] cluster binding. Residue E442 participates in Mg(2+) binding. The Proton acceptor role is filled by S468.

Belongs to the IlvD/Edd family. Homodimer. The cofactor is [2Fe-2S] cluster. Mg(2+) is required as a cofactor.

The catalysed reaction is (2R)-2,3-dihydroxy-3-methylbutanoate = 3-methyl-2-oxobutanoate + H2O. It carries out the reaction (2R,3R)-2,3-dihydroxy-3-methylpentanoate = (S)-3-methyl-2-oxopentanoate + H2O. Its pathway is amino-acid biosynthesis; L-isoleucine biosynthesis; L-isoleucine from 2-oxobutanoate: step 3/4. The protein operates within amino-acid biosynthesis; L-valine biosynthesis; L-valine from pyruvate: step 3/4. In terms of biological role, functions in the biosynthesis of branched-chain amino acids. Catalyzes the dehydration of (2R,3R)-2,3-dihydroxy-3-methylpentanoate (2,3-dihydroxy-3-methylvalerate) into 2-oxo-3-methylpentanoate (2-oxo-3-methylvalerate) and of (2R)-2,3-dihydroxy-3-methylbutanoate (2,3-dihydroxyisovalerate) into 2-oxo-3-methylbutanoate (2-oxoisovalerate), the penultimate precursor to L-isoleucine and L-valine, respectively. The sequence is that of Dihydroxy-acid dehydratase from Thermotoga sp. (strain RQ2).